Consider the following 129-residue polypeptide: Histone H3 (129 aa).

The disordered stretch occupies residues 1 to 36 (MSRTKETARAKRTITSKKSKKAPSGASGVKRSHRRW). Basic residues predominate over residues 10 to 21 (AKRTITSKKSKK).

This sequence belongs to the histone H3 family. As to quaternary structure, the nucleosome is a histone octamer containing two molecules each of H2A, H2B, H3 and H4 assembled in one H3-H4 heterotetramer and two H2A-H2B heterodimers. The octamer wraps approximately 147 bp of DNA.

The protein resides in the nucleus. It is found in the chromosome. In terms of biological role, core component of nucleosome. Nucleosomes wrap and compact DNA into chromatin, limiting DNA accessibility to the cellular machineries which require DNA as a template. Histones thereby play a central role in transcription regulation, DNA repair, DNA replication and chromosomal stability. DNA accessibility is regulated via a complex set of post-translational modifications of histones, also called histone code, and nucleosome remodeling. The chain is Histone H3 from Leishmania infantum.